A 647-amino-acid chain; its full sequence is DNA mismatch repair protein MutL (647 aa).

Positions 377–396 (EEPQAVKQSAQLWQPPKQEW) are disordered. A compositionally biased stretch (low complexity) spans 387–396 (QLWQPPKQEW).

Belongs to the DNA mismatch repair MutL/HexB family.

Its function is as follows. This protein is involved in the repair of mismatches in DNA. It is required for dam-dependent methyl-directed DNA mismatch repair. May act as a 'molecular matchmaker', a protein that promotes the formation of a stable complex between two or more DNA-binding proteins in an ATP-dependent manner without itself being part of a final effector complex. The polypeptide is DNA mismatch repair protein MutL (Bacillus cereus (strain AH187)).